A 223-amino-acid chain; its full sequence is Deoxyribose-phosphate aldolase (223 aa).

The active-site Proton donor/acceptor is Asp89. Lys152 serves as the catalytic Schiff-base intermediate with acetaldehyde. Lys181 acts as the Proton donor/acceptor in catalysis.

The protein belongs to the DeoC/FbaB aldolase family. DeoC type 1 subfamily.

It is found in the cytoplasm. It catalyses the reaction 2-deoxy-D-ribose 5-phosphate = D-glyceraldehyde 3-phosphate + acetaldehyde. The protein operates within carbohydrate degradation; 2-deoxy-D-ribose 1-phosphate degradation; D-glyceraldehyde 3-phosphate and acetaldehyde from 2-deoxy-alpha-D-ribose 1-phosphate: step 2/2. Catalyzes a reversible aldol reaction between acetaldehyde and D-glyceraldehyde 3-phosphate to generate 2-deoxy-D-ribose 5-phosphate. In Bacillus cereus (strain AH187), this protein is Deoxyribose-phosphate aldolase.